The primary structure comprises 979 residues: Putative transcription initiation factor TFIID 111 kDa subunit (979 aa).

Position 244 is a phosphoserine (Ser244).

In terms of assembly, TFIID is composed of TATA binding protein (TBP) and a number of TBP-associated factors (TAFs).

The protein resides in the nucleus. In terms of biological role, TAFs are components of the transcription factor IID (TFIID) complex that are essential for mediating regulation of RNA polymerase transcription. The chain is Putative transcription initiation factor TFIID 111 kDa subunit from Schizosaccharomyces pombe (strain 972 / ATCC 24843) (Fission yeast).